The primary structure comprises 590 residues: Pentatricopeptide repeat-containing protein At1g63070, mitochondrial (590 aa).

The transit peptide at Met1 to Phe34 directs the protein to the mitochondrion. 14 PPR repeats span residues Ser74–His108, Asn109–Pro143, Ser144–Pro178, Asp179–Pro213, Asp214–Ala248, Asp249–Pro283, Asp284–Pro318, Asp319–Phe353, Asp355–Gly389, Asn390–Pro424, Asp425–Leu459, Asp460–Pro494, Asn495–Pro529, and Asn530–Gly564.

This sequence belongs to the PPR family. P subfamily.

The protein resides in the mitochondrion. The sequence is that of Pentatricopeptide repeat-containing protein At1g63070, mitochondrial from Arabidopsis thaliana (Mouse-ear cress).